Consider the following 222-residue polypeptide: Deoxyribose-phosphate aldolase (222 aa).

Asp-94 (proton donor/acceptor) is an active-site residue. The active-site Schiff-base intermediate with acetaldehyde is the Lys-156. The active-site Proton donor/acceptor is Lys-185.

It belongs to the DeoC/FbaB aldolase family. DeoC type 1 subfamily.

The protein localises to the cytoplasm. It carries out the reaction 2-deoxy-D-ribose 5-phosphate = D-glyceraldehyde 3-phosphate + acetaldehyde. It functions in the pathway carbohydrate degradation; 2-deoxy-D-ribose 1-phosphate degradation; D-glyceraldehyde 3-phosphate and acetaldehyde from 2-deoxy-alpha-D-ribose 1-phosphate: step 2/2. Functionally, catalyzes a reversible aldol reaction between acetaldehyde and D-glyceraldehyde 3-phosphate to generate 2-deoxy-D-ribose 5-phosphate. The sequence is that of Deoxyribose-phosphate aldolase from Malacoplasma penetrans (strain HF-2) (Mycoplasma penetrans).